The primary structure comprises 95 residues: Small ribosomal subunit protein bS16 (95 aa).

The protein belongs to the bacterial ribosomal protein bS16 family.

This chain is Small ribosomal subunit protein bS16, found in Mycoplasma genitalium (strain ATCC 33530 / DSM 19775 / NCTC 10195 / G37) (Mycoplasmoides genitalium).